A 66-amino-acid chain; its full sequence is Large ribosomal subunit protein uL29 (66 aa).

The protein belongs to the universal ribosomal protein uL29 family.

This is Large ribosomal subunit protein uL29 from Chelativorans sp. (strain BNC1).